Here is a 393-residue protein sequence, read N- to C-terminus: Glutamate 5-kinase 1 (393 aa).

Lysine 17 provides a ligand contact to ATP. Substrate is bound by residues serine 57, aspartate 144, and asparagine 156. Serine 176–aspartate 177 is a binding site for ATP. In terms of domain architecture, PUA spans alanine 282–alanine 359.

It belongs to the glutamate 5-kinase family.

The protein localises to the cytoplasm. The catalysed reaction is L-glutamate + ATP = L-glutamyl 5-phosphate + ADP. The protein operates within amino-acid biosynthesis; L-proline biosynthesis; L-glutamate 5-semialdehyde from L-glutamate: step 1/2. In terms of biological role, catalyzes the transfer of a phosphate group to glutamate to form L-glutamate 5-phosphate. This chain is Glutamate 5-kinase 1, found in Rhizobium meliloti (strain 1021) (Ensifer meliloti).